We begin with the raw amino-acid sequence, 565 residues long: Bicyclogermacrene synthase (565 aa).

Aspartate 317, aspartate 321, aspartate 461, and glutamate 469 together coordinate Mg(2+). The DDXXD motif signature appears at 317–321 (DDTFD).

Belongs to the terpene synthase family. Mg(2+) serves as cofactor.

The catalysed reaction is (2E,6E)-farnesyl diphosphate = bicyclogermacrene + diphosphate. It functions in the pathway secondary metabolite biosynthesis; terpenoid biosynthesis. Sesquiterpene synthase converting farnesyl diphosphate to bicyclogermacrene as the major product. This chain is Bicyclogermacrene synthase, found in Phyla dulcis (Aztec sweet herb).